A 261-amino-acid chain; its full sequence is Snake venom serine protease (261 aa).

The first 20 residues, 1 to 20 (MALIGVLANLLILCLSYART), serve as a signal peptide directing secretion. The propeptide occupies 21-24 (APDR). The region spanning 25 to 249 (IIGGLECNQN…YIDWIQDIMA (225 aa)) is the Peptidase S1 domain. 6 disulfide bridges follow: Cys31–Cys163, Cys50–Cys66, Cys98–Cys256, Cys142–Cys210, Cys174–Cys189, and Cys200–Cys225. His65 (charge relay system) is an active-site residue. N-linked (GlcNAc...) asparagine glycosylation occurs at Asn103. Catalysis depends on Asp110, which acts as the Charge relay system. 2 N-linked (GlcNAc...) asparagine glycosylation sites follow: Asn117 and Asn121. Ser204 acts as the Charge relay system in catalysis.

The protein belongs to the peptidase S1 family. Snake venom subfamily. As to quaternary structure, monomer. In terms of tissue distribution, expressed by the venom gland.

Its subcellular location is the secreted. Its function is as follows. Snake venom serine protease that may act in the hemostasis system of the prey. The protein is Snake venom serine protease of Philodryas olfersii (Green snake).